Reading from the N-terminus, the 602-residue chain is Serine/threonine-protein phosphatase 2A 56 kDa regulatory subunit delta isoform (602 aa).

The span at 1 to 13 (MPYKLKKEKEPPK) shows a compositional bias: basic and acidic residues. A disordered region spans residues 1-96 (MPYKLKKEKE…QSSSRFNLSK (96 aa)). 5 consecutive repeat copies span residues 37–38 (QP), 39–40 (QP), 41–42 (QP), 43–44 (QP), and 45–46 (QP). The 8 X 2 AA approximate tandem repeats of Q-P stretch occupies residues 37 to 52 (QPQPQPQPQPQAQSQP). Over residues 46–55 (PQAQSQPPSS) the composition is skewed to low complexity. The stretch at 47 to 48 (QA) is one 6; approximate repeat. The stretch at 49–50 (QS) is one 7; approximate repeat. Repeat 8 spans residues 51-52 (QP). Thr63 is subject to Phosphothreonine. A phosphoserine mark is found at Ser88, Ser89, and Ser90. Positions 523–530 (RAPPPLPP) match the SH3-binding; class I motif. The Nuclear localization signal signature appears at 548–565 (KRTVETEAVQMLKDIKKE). Ser573 and Ser598 each carry phosphoserine.

Belongs to the phosphatase 2A regulatory subunit B56 family. PP2A consists of a common heterodimeric core enzyme, composed of a 36 kDa catalytic subunit (subunit C) and a 65 kDa constant regulatory subunit (PR65 or subunit A), that associates with a variety of regulatory subunits. Proteins that associate with the core dimer include three families of regulatory subunits B (the R2/B/PR55/B55, R3/B''/PR72/PR130/PR59 and R5/B'/B56 families), the 48 kDa variable regulatory subunit, viral proteins, and cell signaling molecules. Interacts with the PP2A A subunit PPP2R1A. Interacts with SGO1. Interacts with ADCY8. Isoform Delta-2 is widely expressed. Isoform Delta-1 is highly expressed in brain.

Its subcellular location is the cytoplasm. It is found in the nucleus. The B regulatory subunit might modulate substrate selectivity and catalytic activity, and might also direct the localization of the catalytic enzyme to a particular subcellular compartment. The chain is Serine/threonine-protein phosphatase 2A 56 kDa regulatory subunit delta isoform (PPP2R5D) from Homo sapiens (Human).